Consider the following 639-residue polypeptide: MRKDVVLLVGGAQGSGLETTMQVLAPAYASLGYGVLANREYFSNIVGRHSYIHIRVSSSGEARPLYYPADFLGAMDAETVFTHWDDIGEGAFLLYDLGTARMRLQQIASMEPDLRSRLMQQYREAGIEPFTVEKVVEYLEREKRVRVIGLSFTALFDVLIKKHGLSRAQAQRFRSSILIGAIAGLTSLDREALDLGLQRRFGSRPKVLEINRDFIASVADEVEKEYGAQLKLEPAEPKSGEYVVASGNDVVAMGKVVGGVRYQAYYPITPASDESVLLEEFEGLKIDGESLGSIAILQTEDEIAAVSSVIGAALTGARASTATSGPGFSLMVEALGWAGKNDVPMVITYYQRGGPSTGLPTRGSQSDLLFSLFASHGEFPRIILSSGDHLEAFYDAIEAYNLAERFQMPVIHLLDKFLANMVASVPFPDWKAIKIDRGKTLFKAPTGPFKRFPRDQPLADRPVLGSGAITWYTGDENDEYGHIDEDPVNRLVMYERRWKKMEIADREIPEDFRVKYYGDEDAEVLLVGWGSVKIPALEAIERLREMGVNAAYLHLRMLSPLPKRRVSEVLSRFDADRVIAVEANYLGQASKIVTMETGFMFRKYILKWTGRPVYLHELVEGVLDIVRNGRDKVVLSYGK.

The short motif at 266–270 is the YPITP motif element; sequence YPITP. Substrate contacts are provided by T269 and R352.

In terms of assembly, heterodimer composed of an alpha and a beta subunit.

It catalyses the reaction a 2-oxocarboxylate + 2 oxidized [2Fe-2S]-[ferredoxin] + CoA = an acyl-CoA + 2 reduced [2Fe-2S]-[ferredoxin] + CO2 + H(+). In terms of biological role, catalyzes the coenzyme A-dependent oxidative decarboxylation of different 2-oxoacids such as pyruvate, 2-oxobutyrate and glyoxylate to form their CoA derivatives. The chain is 2-oxoacid:ferredoxin oxidoreductase 1, subunit alpha from Aeropyrum pernix (strain ATCC 700893 / DSM 11879 / JCM 9820 / NBRC 100138 / K1).